The chain runs to 62 residues: Rubredoxin-2 (62 aa).

Residues 7-58 (MWRCQMVNCGYVYDPDRGDKRRKVPAGTKFEDLPEDWRCPVCGAGKKSFRRL) form the Rubredoxin-like domain. Residues Cys-10, Cys-15, Cys-45, and Cys-48 each contribute to the Fe cation site.

The protein belongs to the rubredoxin family. In terms of assembly, monomer. Fe(3+) serves as cofactor.

Its function is as follows. Rubredoxin is a small nonheme, iron protein lacking acid-labile sulfide. Its single Fe, chelated to 4 Cys, functions as an electron acceptor and may also stabilize the conformation of the molecule. The sequence is that of Rubredoxin-2 (rd2) from Desulfovibrio desulfuricans (strain ATCC 27774 / DSM 6949 / MB).